Reading from the N-terminus, the 389-residue chain is Cytochrome b (389 aa).

Helical transmembrane passes span 32 to 52 (FGSL…FLAM), 76 to 98 (YILR…VHIG), 113 to 133 (LWSI…LGYV), and 179 to 199 (FFSL…AHMI). Histidine 82 and histidine 96 together coordinate heme b. Histidine 183 and histidine 197 together coordinate heme b. Residue histidine 202 participates in a ubiquinone binding. 4 consecutive transmembrane segments (helical) span residues 225 to 245 (FIFK…IIVF), 289 to 309 (LLGV…PFVD), 322 to 342 (INMV…LVGA), and 349 to 369 (FIFL…VIVP).

Belongs to the cytochrome b family. Fungal cytochrome b-c1 complex contains 10 subunits; 3 respiratory subunits, 2 core proteins and 5 low-molecular weight proteins. Cytochrome b-c1 complex is a homodimer. It depends on heme b as a cofactor.

It is found in the mitochondrion inner membrane. Its function is as follows. Component of the ubiquinol-cytochrome c reductase complex (complex III or cytochrome b-c1 complex) that is part of the mitochondrial respiratory chain. The b-c1 complex mediates electron transfer from ubiquinol to cytochrome c. Contributes to the generation of a proton gradient across the mitochondrial membrane that is then used for ATP synthesis. In Mycena viridimarginata, this protein is Cytochrome b (COB).